The primary structure comprises 261 residues: Hemin import ATP-binding protein HmuV (261 aa).

The ABC transporter domain occupies 7–243 (LRGQNLSLQF…EIIDAVYGYK (237 aa)). Residue 39–46 (GPNGAGKS) participates in ATP binding.

Belongs to the ABC transporter superfamily. Heme (hemin) importer (TC 3.A.1.14.5) family. In terms of assembly, the complex is composed of two ATP-binding proteins (HmuV), two transmembrane proteins (HmuU) and a solute-binding protein (HmuT).

The protein localises to the cell inner membrane. Functionally, part of the ABC transporter complex HmuTUV involved in hemin import. Responsible for energy coupling to the transport system. The sequence is that of Hemin import ATP-binding protein HmuV from Vibrio vulnificus (strain CMCP6).